Reading from the N-terminus, the 417-residue chain is Serine hydroxymethyltransferase 1 (417 aa).

(6S)-5,6,7,8-tetrahydrofolate-binding positions include L121 and 125-127; that span reads GHL. K229 is modified (N6-(pyridoxal phosphate)lysine). (6S)-5,6,7,8-tetrahydrofolate is bound at residue 354-356; it reads SPF.

It belongs to the SHMT family. In terms of assembly, homodimer. Pyridoxal 5'-phosphate is required as a cofactor.

The protein resides in the cytoplasm. The catalysed reaction is (6R)-5,10-methylene-5,6,7,8-tetrahydrofolate + glycine + H2O = (6S)-5,6,7,8-tetrahydrofolate + L-serine. It participates in one-carbon metabolism; tetrahydrofolate interconversion. It functions in the pathway amino-acid biosynthesis; glycine biosynthesis; glycine from L-serine: step 1/1. Catalyzes the reversible interconversion of serine and glycine with tetrahydrofolate (THF) serving as the one-carbon carrier. This reaction serves as the major source of one-carbon groups required for the biosynthesis of purines, thymidylate, methionine, and other important biomolecules. Also exhibits THF-independent aldolase activity toward beta-hydroxyamino acids, producing glycine and aldehydes, via a retro-aldol mechanism. This Pseudomonas savastanoi pv. phaseolicola (strain 1448A / Race 6) (Pseudomonas syringae pv. phaseolicola (strain 1448A / Race 6)) protein is Serine hydroxymethyltransferase 1.